The sequence spans 135 residues: Beta-galactoside-binding lectin (135 aa).

Ser2 carries the post-translational modification N-acetylserine. Cysteines 3 and 8 form a disulfide. Residues 5–135 form the Galectin domain; it reads GPVCTNLGLK…DFTLRSVSWE (131 aa). Residues 46 to 50, His54, Asn63, 70 to 73, and 70 to 76 contribute to the a beta-D-galactoside site; these read HFNPR, WGTE, and WGTEQRE.

As to quaternary structure, homodimer; disulfide-linked. In terms of assembly, (Microbial infection) Interacts with newcastle disease virus protein HN; this interaction inhibits viral adsorption rather than internalization. As to expression, mainly in the intestine (adult), mainly in the skin (embryo).

In terms of biological role, this protein binds beta-galactoside. May participate in host antiviral defense through specific interaction with glycans on the viral envelope glycoproteins. This is Beta-galactoside-binding lectin (CG-1B) from Gallus gallus (Chicken).